The chain runs to 44 residues: Thymosin beta-4 (44 aa).

Composition is skewed to basic and acidic residues over residues methionine 1–glutamate 25 and glutamate 33–serine 44. The tract at residues methionine 1–serine 44 is disordered. The residue at position 2 (serine 2) is an N-acetylserine.

The protein belongs to the thymosin beta family. Spleen, kidney, heart, and oocytes.

The protein localises to the cytoplasm. Its subcellular location is the cytoskeleton. Plays an important role in the organization of the cytoskeleton. Binds to and sequesters actin monomers (G actin) and therefore inhibits actin polymerization. The polypeptide is Thymosin beta-4 (tmsb4) (Xenopus laevis (African clawed frog)).